Reading from the N-terminus, the 421-residue chain is Queuine tRNA-ribosyltransferase accessory subunit 2 (421 aa).

Residues C328, C330, C333, and H359 each coordinate Zn(2+).

The protein belongs to the queuine tRNA-ribosyltransferase family. QTRT2 subfamily. As to quaternary structure, heterodimer of a catalytic subunit and an accessory subunit. The cofactor is Zn(2+).

The protein localises to the cytoplasm. In terms of biological role, non-catalytic subunit of the queuine tRNA-ribosyltransferase (TGT) that catalyzes the base-exchange of a guanine (G) residue with queuine (Q) at position 34 (anticodon wobble position) in tRNAs with GU(N) anticodons (tRNA-Asp, -Asn, -His and -Tyr), resulting in the hypermodified nucleoside queuosine (7-(((4,5-cis-dihydroxy-2-cyclopenten-1-yl)amino)methyl)-7-deazaguanosine). This is Queuine tRNA-ribosyltransferase accessory subunit 2 from Aedes aegypti (Yellowfever mosquito).